The primary structure comprises 453 residues: Calcium-binding tyrosine phosphorylation-regulated protein (453 aa).

The region spanning 12 to 49 (YGLKTLLEGVSRAILKTNPTNITQFAAVYFKELIVFRE) is the RIIa domain. 3 disordered regions span residues 86–165 (PIKP…PVSA), 246–278 (PVSE…QVTS), and 406–453 (IINP…PEQV). Positions 143–154 (DKPTTPKTDYTP) are enriched in low complexity.

Interacts with FSCB. Post-translationally, phosphorylated on tyrosine residues during in vitro capacitation. Dephosphorylation affects its ability to bind calcium. In terms of tissue distribution, expressed in spermatozoa.

It localises to the cytoplasm. It is found in the cytoskeleton. Its subcellular location is the cell projection. The protein resides in the cilium. The protein localises to the flagellum. Its function is as follows. May function as a regulator of both motility- and head-associated functions such as capacitation and the acrosome reaction. May bind calcium in vitro. In Mus musculus (Mouse), this protein is Calcium-binding tyrosine phosphorylation-regulated protein (Cabyr).